The following is a 1298-amino-acid chain: Ras guanine nucleotide exchange factor Q (1298 aa).

5 disordered regions span residues 1-26 (MDINNNIDNITNSNNNIEKNNNINNF), 46-88 (NNNI…SIEG), 211-271 (NISN…GPLK), 314-384 (YTPP…QQQQ), and 459-533 (LSNG…STTT). 2 stretches are compositionally biased toward low complexity: residues 211–245 (NISNNNNNNNNNSNNSNNNNNMSSSDNNNNSNSNN) and 315–384 (TPPS…QQQQ). A coiled-coil region spans residues 352–389 (SSLNANNNTNNNNQQLQQQQQQQQQQQLQQQQQLTKSY). Polar residues predominate over residues 473 to 482 (LHLSTESTTS). Composition is skewed to low complexity over residues 483–501 (NNNNNNNNNNNNNNNNNNN) and 508–533 (TTNSATTTTTTTTTTTTTTTTNSTTT). Positions 550–689 (DKDEVIAGER…YLKKAINDSG (140 aa)) constitute an N-terminal Ras-GEF domain. One can recognise a DEP domain in the interval 723–801 (MSQSLQLKER…SSSSTTTTTT (79 aa)). Disordered stretches follow at residues 781 to 864 (SKSG…PNSI) and 884 to 920 (GIANGSSTPSIPSSVTSPLTNSKSTLNSTPSSSSNSF). The span at 783–864 (SGSSFSPSSS…ITSTSLPNSI (82 aa)) shows a compositional bias: low complexity. One can recognise a Ras-GEF domain in the interval 964–1193 (HPVEIARQLT…YKASHMIEQP (230 aa)). The tract at residues 1214-1267 (TTTTTNNLNNNNNNNNPNNNNNNNNNSANNKSSPSPSPSSSPITSSPISSLTIN) is disordered.

Promotes the exchange of Ras-bound GDP by GTP. Seems to play a role in chemotaxis. In Dictyostelium discoideum (Social amoeba), this protein is Ras guanine nucleotide exchange factor Q (gefQ).